The sequence spans 68 residues: Adipokinetic prohormone type 1 (68 aa).

The first 20 residues, 1 to 20 (MNYVSIFVLIVACLCVLADA), serve as a signal peptide directing secretion. The residue at position 21 (Q21) is a Pyrrolidone carboxylic acid. Residue G30 is modified to Glycine amide. Residues 34-68 (GAVAATMSCRSEETIAAIYKLIQNEAERLLLCQKP) constitute a propeptide that is removed on maturation.

Expressed in antennal lobe (AL), corpora cardiaca (CC), corpora allata (CA) and gnathal ganglion (GNG) (at protein level). Expression in CC and CA detected in all animals, expression in GNG in some animals and in AL in few animals (at protein level).

It localises to the secreted. Its function is as follows. This hormone, released from cells in the corpora cardiaca, causes release of diglycerides from the fat body and stimulation of muscles to use these diglycerides as an energy source during energy-demanding processes. The protein is Adipokinetic prohormone type 1 of Agrotis ipsilon (Black cutworm moth).